Reading from the N-terminus, the 352-residue chain is Heat-inducible transcription repressor HrcA (352 aa).

The protein belongs to the HrcA family.

Its function is as follows. Negative regulator of class I heat shock genes (grpE-dnaK-dnaJ and groELS operons). Prevents heat-shock induction of these operons. This Ralstonia nicotianae (strain ATCC BAA-1114 / GMI1000) (Ralstonia solanacearum) protein is Heat-inducible transcription repressor HrcA.